Reading from the N-terminus, the 102-residue chain is Large ribosomal subunit protein bL21 (102 aa).

It belongs to the bacterial ribosomal protein bL21 family. In terms of assembly, part of the 50S ribosomal subunit. Contacts protein L20.

Functionally, this protein binds to 23S rRNA in the presence of protein L20. The sequence is that of Large ribosomal subunit protein bL21 from Photorhabdus laumondii subsp. laumondii (strain DSM 15139 / CIP 105565 / TT01) (Photorhabdus luminescens subsp. laumondii).